Here is a 251-residue protein sequence, read N- to C-terminus: Phosphate import ATP-binding protein PstB (251 aa).

The ABC transporter domain occupies Phe-5 to Leu-246. Position 37 to 44 (Gly-37 to Ser-44) interacts with ATP.

It belongs to the ABC transporter superfamily. Phosphate importer (TC 3.A.1.7) family. The complex is composed of two ATP-binding proteins (PstB), two transmembrane proteins (PstC and PstA) and a solute-binding protein (PstS).

It localises to the cell membrane. It carries out the reaction phosphate(out) + ATP + H2O = ADP + 2 phosphate(in) + H(+). Functionally, part of the ABC transporter complex PstSACB involved in phosphate import. Responsible for energy coupling to the transport system. This Archaeoglobus fulgidus (strain ATCC 49558 / DSM 4304 / JCM 9628 / NBRC 100126 / VC-16) protein is Phosphate import ATP-binding protein PstB.